The chain runs to 281 residues: Proteasome subunit beta (281 aa).

Positions M1–G53 are cleaved as a propeptide — removed in mature form; by autocatalysis. T54 serves as the catalytic Nucleophile.

This sequence belongs to the peptidase T1B family. In terms of assembly, the 20S proteasome core is composed of 14 alpha and 14 beta subunits that assemble into four stacked heptameric rings, resulting in a barrel-shaped structure. The two inner rings, each composed of seven catalytic beta subunits, are sandwiched by two outer rings, each composed of seven alpha subunits. The catalytic chamber with the active sites is on the inside of the barrel. Has a gated structure, the ends of the cylinder being occluded by the N-termini of the alpha-subunits. Is capped by the proteasome-associated ATPase, ARC.

The protein resides in the cytoplasm. It carries out the reaction Cleavage of peptide bonds with very broad specificity.. It functions in the pathway protein degradation; proteasomal Pup-dependent pathway. With respect to regulation, the formation of the proteasomal ATPase ARC-20S proteasome complex, likely via the docking of the C-termini of ARC into the intersubunit pockets in the alpha-rings, may trigger opening of the gate for substrate entry. Interconversion between the open-gate and close-gate conformations leads to a dynamic regulation of the 20S proteasome proteolysis activity. Component of the proteasome core, a large protease complex with broad specificity involved in protein degradation. This is Proteasome subunit beta from Streptomyces griseus subsp. griseus (strain JCM 4626 / CBS 651.72 / NBRC 13350 / KCC S-0626 / ISP 5235).